The sequence spans 267 residues: L-aspartate dehydrogenase (267 aa).

NAD(+) contacts are provided by alanine 124 and asparagine 190. Residue histidine 218 is part of the active site.

The protein belongs to the L-aspartate dehydrogenase family.

It carries out the reaction L-aspartate + NADP(+) + H2O = oxaloacetate + NH4(+) + NADPH + H(+). It catalyses the reaction L-aspartate + NAD(+) + H2O = oxaloacetate + NH4(+) + NADH + H(+). It participates in cofactor biosynthesis; NAD(+) biosynthesis; iminoaspartate from L-aspartate (dehydrogenase route): step 1/1. Its function is as follows. Specifically catalyzes the NAD or NADP-dependent dehydrogenation of L-aspartate to iminoaspartate. In Methanococcus maripaludis (strain C5 / ATCC BAA-1333), this protein is L-aspartate dehydrogenase.